A 411-amino-acid chain; its full sequence is Lysosome-associated membrane glycoprotein 2 (411 aa).

A signal peptide spans 1–26; sequence MRLLSPVTGSKLVLLFLFLGAVRSDA. The segment at 27–188 is first lumenal domain; sequence LKLNLTDSKG…SKHEQVCKED (162 aa). Topologically, residues 27–376 are lumenal; sequence LKLNLTDSKG…QDCSADEDNF (350 aa). Cysteine 38 and cysteine 75 form a disulfide bridge. N-linked (GlcNAc...) asparagine glycans are attached at residues asparagine 46, asparagine 57, asparagine 71, asparagine 97, asparagine 109, asparagine 117, asparagine 175, asparagine 223, asparagine 230, asparagine 243, asparagine 261, asparagine 276, asparagine 308, asparagine 318, and asparagine 357. A disulfide bond links cysteine 149 and cysteine 185. Residues 189 to 229 form a hinge region; sequence KTATTVAPIIHTTVPSPTTTLTPTSIPVPTPTVGNYTISNG. The segment at 230–376 is second lumenal domain; that stretch reads NATCLLATMG…QDCSADEDNF (147 aa). An intrachain disulfide couples cysteine 233 to cysteine 266. Cysteines 332 and 369 form a disulfide. A helical transmembrane segment spans residues 377–400; that stretch reads LVPIAVGAALGGVLILVLLAYFIG. At 401-411 the chain is on the cytoplasmic side; the sequence is LKRHHTGYEQF. The tract at residues 402-405 is important for binding and subsequent lysosomal degradation of target proteins; sequence KRHH.

The protein belongs to the LAMP family. In terms of assembly, monomer. Forms large homooligomers. Interacts (via its cytoplasmic region) with HSPA8; HSPA8 mediates recruitment of proteins with a KFERQ motif to the surface of the lysosome for chaperone-mediated autophagy. Interacts with HSP90 in the lysosome lumen; this enhances LAMP2 stability. Interacts with MLLT11. Interacts with ABCB9. Interacts with FURIN. Interacts with CT55; this interaction may be important for LAMP2 protein stability. Interacts with TMEM175; inhibiting the proton channel activity of TMEM175. Forms a ternary complex with RAB7A and RUFY4 (via RUN domain); the interaction with RAB7A is mediated by RUFY4 (via RUN and coiled coil domains). In terms of processing, extensively N-glycosylated. Contains a minor proportion of O-linked glycans. Contains sialylated glycans. As to expression, detected in liver, kidney, spleen and macrophages (at protein level).

It localises to the lysosome membrane. It is found in the endosome membrane. Its subcellular location is the cell membrane. The protein resides in the cytoplasmic vesicle. The protein localises to the autophagosome membrane. In terms of biological role, lysosomal membrane glycoprotein which plays an important role in lysosome biogenesis, lysosomal pH regulation and autophagy. Acts as an important regulator of lysosomal lumen pH regulation by acting as a direct inhibitor of the proton channel TMEM175, facilitating lysosomal acidification for optimal hydrolase activity. Plays an important role in chaperone-mediated autophagy, a process that mediates lysosomal degradation of proteins in response to various stresses and as part of the normal turnover of proteins with a long biological half-live. Functions by binding target proteins, such as GAPDH, NLRP3 and MLLT11, and targeting them for lysosomal degradation. In the chaperone-mediated autophagy, acts downstream of chaperones, such as HSPA8/HSC70, which recognize and bind substrate proteins and mediate their recruitment to lysosomes, where target proteins bind LAMP2. Plays a role in lysosomal protein degradation in response to starvation. Required for the fusion of autophagosomes with lysosomes during autophagy. Cells that lack LAMP2 express normal levels of VAMP8, but fail to accumulate STX17 on autophagosomes, which is the most likely explanation for the lack of fusion between autophagosomes and lysosomes. Required for normal degradation of the contents of autophagosomes. Required for efficient MHC class II-mediated presentation of exogenous antigens via its function in lysosomal protein degradation; antigenic peptides generated by proteases in the endosomal/lysosomal compartment are captured by nascent MHC II subunits. Is not required for efficient MHC class II-mediated presentation of endogenous antigens. The protein is Lysosome-associated membrane glycoprotein 2 (Lamp2) of Rattus norvegicus (Rat).